The chain runs to 923 residues: MADEALAGLDEGALRKLLEVTADLAERRRIRSAIRELQRQELEREEEALASKRFRAERQDNKENWLHSQQREAEQQAALARLAGRLESMNDVEELTTLLRSAGEYEERKLIRAAIRRVRAQEIKAATLAGRLCSRLPSSGPREDSRRQAAHTLDPGKVPEPEQQEQQTEVLEPTPTPEDTSQDVTTVTLLLRAPPGGRPSSPASPHNSPTSASPEPLLEPAGAQCPAVEAPVSSEPLPHPSEAPSPEPPMSPVPSSSRGRVISKPLPGPTEPSDTLDSIRGFSNTKRADPSETKSCQRSLSVLSPRQPTPNREPTSLAGPSQFRRVGSVRDRVQKFTSDSPVVARLQDGPPRTALASPTPTRLPGPSLISTTPASSSSSNSSSPSPSDTSSHKKQRELAHSLAELQSCPQEEGPGGRGLALRSLENRAGGPKPCSEEPSTPPPVAVGTGEPGGSMKTTFTIEIKDGRGQASTGRVLLPTGNQRAELTLGLRAPPTLLSTSSGGKNTITHISNPGTVTRLGSVTHVTTFSHASPGNRGGCNFKMEPDPAEPPSTTVEAANGAEQARVDKGPEGRSPLSAEELTAIEDEGVLDKMLDQTTNFEERKLIRAALRELRQRKRDQRDKERERRLREARARPGESRSNVATETTTRHSQRAADGSTVGTVTKTERLVHSNDGTQTARTTTVESSFMRRLENGSSSSSTTTTTVQTKSFSSSSSSSSSKKMGSIFDREDQTSSRPGSLAALERRQAEKKKELMKAQSLPKTSASQARKAMIEKLEKEGSAGGPGTPRTAVQRSTSFGVPNANSIKQMLLDWCRAKTRGYEHVDIQNFSSSWSDGMAFCALVHNFFPEAFDYGQLSPQNRRQNFEMAFSSAEMLVDCVPLVEVEDMMIMGKKPDPKCVFTYVQSLYNHLRRHELRLRGKNV.

A2 carries the post-translational modification N-acetylalanine. Residues 24–89 (LAERRRIRSA…ARLAGRLESM (66 aa)) adopt a coiled-coil conformation. The tract at residues 134–456 (SRLPSSGPRE…GTGEPGGSMK (323 aa)) is disordered. 2 stretches are compositionally biased toward low complexity: residues 164–179 (QEQQ…TPED) and 192–205 (RAPP…PASP). Over residues 237–252 (LPHPSEAPSPEPPMSP) the composition is skewed to pro residues. 2 stretches are compositionally biased toward polar residues: residues 272–285 (PSDT…FSNT) and 293–314 (TKSC…NREP). Phosphoserine occurs at positions 299, 301, 304, and 340. 2 positions are modified to phosphothreonine: T359 and T372. Low complexity predominate over residues 366 to 389 (PSLISTTPASSSSSNSSSPSPSDT). A phosphoserine mark is found at S501, S521, and S574. Disordered stretches follow at residues 542-578 (KMEP…PLSA) and 615-772 (QRKR…ARKA). A coiled-coil region spans residues 601-628 (EERKLIRAALRELRQRKRDQRDKERERR). Basic and acidic residues predominate over residues 615 to 638 (QRKRDQRDKERERRLREARARPGE). Residue S641 is modified to Phosphoserine. The segment covering 674-687 (NDGTQTARTTTVES) has biased composition (polar residues). Low complexity predominate over residues 697 to 721 (SSSSSTTTTTVQTKSFSSSSSSSSS). Position 735 is a phosphoserine (S735). The span at 744 to 756 (LERRQAEKKKELM) shows a compositional bias: basic and acidic residues. Phosphoserine is present on S798. Positions 805–912 (NSIKQMLLDW…YVQSLYNHLR (108 aa)) constitute a Calponin-homology (CH) domain.

This sequence belongs to the smoothelin family.

The protein resides in the cytoplasm. It is found in the cytoskeleton. Functionally, structural protein of the cytoskeleton. The chain is Smoothelin (Smtn) from Mus musculus (Mouse).